The primary structure comprises 232 residues: 2-C-methyl-D-erythritol 4-phosphate cytidylyltransferase (232 aa).

It belongs to the IspD/TarI cytidylyltransferase family. IspD subfamily.

It carries out the reaction 2-C-methyl-D-erythritol 4-phosphate + CTP + H(+) = 4-CDP-2-C-methyl-D-erythritol + diphosphate. Its pathway is isoprenoid biosynthesis; isopentenyl diphosphate biosynthesis via DXP pathway; isopentenyl diphosphate from 1-deoxy-D-xylulose 5-phosphate: step 2/6. In terms of biological role, catalyzes the formation of 4-diphosphocytidyl-2-C-methyl-D-erythritol from CTP and 2-C-methyl-D-erythritol 4-phosphate (MEP). This Deinococcus radiodurans (strain ATCC 13939 / DSM 20539 / JCM 16871 / CCUG 27074 / LMG 4051 / NBRC 15346 / NCIMB 9279 / VKM B-1422 / R1) protein is 2-C-methyl-D-erythritol 4-phosphate cytidylyltransferase.